The following is a 102-amino-acid chain: ATP-dependent Clp protease adapter protein ClpS (102 aa).

It belongs to the ClpS family. In terms of assembly, binds to the N-terminal domain of the chaperone ClpA.

Its function is as follows. Involved in the modulation of the specificity of the ClpAP-mediated ATP-dependent protein degradation. This chain is ATP-dependent Clp protease adapter protein ClpS, found in Wolinella succinogenes (strain ATCC 29543 / DSM 1740 / CCUG 13145 / JCM 31913 / LMG 7466 / NCTC 11488 / FDC 602W) (Vibrio succinogenes).